A 906-amino-acid chain; its full sequence is Interference hedgehog (906 aa).

Residues 1–20 form the signal peptide; that stretch reads MSPLTSSLLLFSLLTSSLEA. Residues 21–715 lie on the Extracellular side of the membrane; the sequence is IPVLQPSFPP…SHNETVSMSP (695 aa). 4 Ig-like C2-type domains span residues 39 to 144, 134 to 236, 252 to 341, and 346 to 433; these read PGVR…TARL, PLVV…ISSS, PHLL…INVT, and PRIT…LQVN. A disulfide bond links cysteine 62 and cysteine 128. Residues asparagine 85, asparagine 104, asparagine 148, and asparagine 209 are each glycosylated (N-linked (GlcNAc...) asparagine). Cystine bridges form between cysteine 173–cysteine 220 and cysteine 276–cysteine 324. Asparagine 339 and asparagine 388 each carry an N-linked (GlcNAc...) asparagine glycan. Cysteine 367 and cysteine 415 form a disulfide bridge. Residues 427–439 are compositionally biased toward polar residues; the sequence is GTLLQVNPKQIQS. Positions 427 to 476 are disordered; the sequence is GTLLQVNPKQIQSEPRETGSGGGFGSHRSMKPVNHGQKPTKMIPPSPPNV. Fibronectin type-III domains are found at residues 470-578 and 586-681; these read PPSP…LQPG and VPEL…TQRP. Asparagine 475 carries an N-linked (GlcNAc...) asparagine glycan. Residues arginine 506, lysine 512, lysine 514, and arginine 552 each contribute to the heparin site. The N-linked (GlcNAc...) asparagine glycan is linked to asparagine 568. The interval 673–713 is disordered; it reads LKQGRTQRPRASTTEEPTIQGIGDRDTTSHNQPSHNETVSM. Composition is skewed to polar residues over residues 676–689 and 701–713; these read GRTQRPRASTTEEP and SHNQPSHNETVSM. A helical transmembrane segment spans residues 716–736; that stretch reads MLTGTIGGGALLLILLVSAFL. At 737 to 906 the chain is on the cytoplasmic side; that stretch reads CMCRRRSPRG…SSGSLNSVGV (170 aa). The interval 789 to 906 is disordered; it reads AQQQQQQLDE…SSGSLNSVGV (118 aa). Composition is skewed to low complexity over residues 854 to 866 and 890 to 906; these read GNNNNLNQSSEAG and SSRSENLSSGSLNSVGV.

It belongs to the immunoglobulin superfamily. IHOG family. As to quaternary structure, homodimer. Heterotetramer; 2 iHog chains bind 2 hh chains when facilitated by heparin, heparin is required to promote high-affinity interactions between hh and iHog.

The protein localises to the membrane. In terms of biological role, mediates response to the active Hedgehog (Hh) protein signal in embryos, functioning upstream or at the level of patched (ptc). The chain is Interference hedgehog from Drosophila persimilis (Fruit fly).